A 135-amino-acid chain; its full sequence is Nucleoside diphosphate kinase (135 aa).

Positions 11, 59, 87, 93, 104, and 114 each coordinate ATP. His-117 (pros-phosphohistidine intermediate) is an active-site residue.

Belongs to the NDK family. As to quaternary structure, homotetramer. Requires Mg(2+) as cofactor.

It localises to the cytoplasm. The catalysed reaction is a 2'-deoxyribonucleoside 5'-diphosphate + ATP = a 2'-deoxyribonucleoside 5'-triphosphate + ADP. It catalyses the reaction a ribonucleoside 5'-diphosphate + ATP = a ribonucleoside 5'-triphosphate + ADP. In terms of biological role, major role in the synthesis of nucleoside triphosphates other than ATP. The ATP gamma phosphate is transferred to the NDP beta phosphate via a ping-pong mechanism, using a phosphorylated active-site intermediate. This Marinomonas sp. (strain MWYL1) protein is Nucleoside diphosphate kinase.